Here is a 177-residue protein sequence, read N- to C-terminus: Peptidyl-tRNA hydrolase 1 (177 aa).

Residue Tyr-18 participates in tRNA binding. His-23 acts as the Proton acceptor in catalysis. The tRNA site is built by Phe-65, Asn-67, and Asn-113.

It belongs to the PTH family. As to quaternary structure, monomer.

It localises to the cytoplasm. It carries out the reaction an N-acyl-L-alpha-aminoacyl-tRNA + H2O = an N-acyl-L-amino acid + a tRNA + H(+). Hydrolyzes ribosome-free peptidyl-tRNAs (with 1 or more amino acids incorporated), which drop off the ribosome during protein synthesis, or as a result of ribosome stalling. Its function is as follows. Catalyzes the release of premature peptidyl moieties from peptidyl-tRNA molecules trapped in stalled 50S ribosomal subunits, and thus maintains levels of free tRNAs and 50S ribosomes. The sequence is that of Peptidyl-tRNA hydrolase 1 from Corynebacterium glutamicum (strain ATCC 13032 / DSM 20300 / JCM 1318 / BCRC 11384 / CCUG 27702 / LMG 3730 / NBRC 12168 / NCIMB 10025 / NRRL B-2784 / 534).